The chain runs to 2161 residues: SH3 and multiple ankyrin repeat domains protein 1 (2161 aa).

The disordered stretch occupies residues M1–S53. The segment covering S17 to G32 has biased composition (low complexity). Over residues P33–A47 the composition is skewed to gly residues. The residue at position 186 (Y186) is a Phosphotyrosine. 6 ANK repeats span residues S212–R245, D246–R278, R279–E312, N313–A345, S346–N378, and N379–L395. Disordered stretches follow at residues E412 to A433 and G455 to R546. The segment covering G455–T479 has biased composition (low complexity). The span at P527–G542 shows a compositional bias: gly residues. S540 carries the post-translational modification Phosphoserine. Residue R544 is modified to Omega-N-methylarginine. The 60-residue stretch at V554 to N613 folds into the SH3 domain. The 95-residue stretch at T663–T757 folds into the PDZ domain. Phosphoserine is present on residues S671 and S791. The disordered stretch occupies residues T832–L886. S890 is modified (phosphoserine). 7 disordered regions span residues S909–T1229, R1241–D1289, L1353–S1720, G1734–P1785, L1827–A1860, P1892–L1983, and R1996–L2023. Residues I920–P939 show a composition bias toward pro residues. R950 is modified (omega-N-methylarginine). The span at A996–P1020 shows a compositional bias: basic residues. An omega-N-methylarginine mark is found at R1051, R1090, and R1101. Pro residues predominate over residues P1127–V1144. The span at S1164–P1181 shows a compositional bias: low complexity. Residues S1199–P1220 are compositionally biased toward pro residues. Residues R1241–R1252 show a composition bias toward basic and acidic residues. Asymmetric dimethylarginine is present on R1253. S1287 is subject to Phosphoserine. Basic and acidic residues predominate over residues A1359–S1368. Positions P1374–T1391 are enriched in pro residues. An Omega-N-methylarginine modification is found at R1423. S1436 is subject to Phosphoserine. Pro residues-rich tracts occupy residues G1517–T1532 and P1583–A1609. Residues D1618–Q1636 show a composition bias toward polar residues. The span at D1644 to G1670 shows a compositional bias: pro residues. A compositionally biased stretch (basic and acidic residues) spans V1678–L1688. Residues S1692–A1702 are compositionally biased toward low complexity. Composition is skewed to gly residues over residues E1703–V1718 and A1764–G1774. A compositionally biased stretch (low complexity) spans G1775 to P1785. The segment covering P1844 to L1855 has biased composition (pro residues). R1895 is subject to Omega-N-methylarginine. Low complexity-rich tracts occupy residues S1917–L1940, T1954–T1980, and R1996–A2006. Omega-N-methylarginine is present on residues R2016, R2036, and R2074. In terms of domain architecture, SAM spans W2098–R2161.

The protein belongs to the SHANK family. As to quaternary structure, may homomultimerize via its SAM domain. Interacts with the C-terminus of SSTR2 via the PDZ domain. Interacts with IGSF9, SHARPIN, SPTAN1, HOMER1 and DLGAP1/GKAP isoforms 1 and 2. Part of a complex with DLG4/PSD-95 and DLGAP1/GKAP. Interacts with BAIAP2. Interacts with HOMER1 and HOMER3. As to expression, expressed in brain particularly in the amygdala, hippocampus, substantia nigra and thalamus. Isoform 2 seems to be expressed ubiquitously.

Its subcellular location is the cytoplasm. It localises to the postsynaptic density. It is found in the synapse. In terms of biological role, seems to be an adapter protein in the postsynaptic density (PSD) of excitatory synapses that interconnects receptors of the postsynaptic membrane including NMDA-type and metabotropic glutamate receptors via complexes with GKAP/PSD-95 and Homer, respectively, and the actin-based cytoskeleton. Plays a role in the structural and functional organization of the dendritic spine and synaptic junction. This Homo sapiens (Human) protein is SH3 and multiple ankyrin repeat domains protein 1 (SHANK1).